Consider the following 1087-residue polypeptide: Exportin-7 (1087 aa).

Residue Ala2 is modified to N-acetylalanine. Residues 30 to 96 (AEKALVEFTN…RNYVLNYLAT (67 aa)) enclose the Importin N-terminal domain. Position 570 is a phosphoserine (Ser570).

It belongs to the exportin family. In terms of assembly, binds to nucleoporins. Found in a complex with XPO7, EIF4A1, ARHGAP1, VPS26A, VPS29, VPS35 and SFN. Interacts with ARHGAP1 and SFN. Interacts with Ran and cargo proteins in a GTP-dependent manner. As to expression, highly expressed in testis and spleen, moderate in kidney and liver and low in heart, brain, lung and skeletal muscle.

It localises to the cytoplasm. The protein resides in the nucleus. Mediates the nuclear export of proteins (cargos) with broad substrate specificity. In the nucleus binds cooperatively to its cargo and to the GTPase Ran in its active GTP-bound form. Docking of this trimeric complex to the nuclear pore complex (NPC) is mediated through binding to nucleoporins. Upon transit of a nuclear export complex into the cytoplasm, disassembling of the complex and hydrolysis of Ran-GTP to Ran-GDP (induced by RANBP1 and RANGAP1, respectively) cause release of the cargo from the export receptor. XPO7 then return to the nuclear compartment and mediate another round of transport. The directionality of nuclear export is thought to be conferred by an asymmetric distribution of the GTP- and GDP-bound forms of Ran between the cytoplasm and nucleus. This is Exportin-7 (Xpo7) from Mus musculus (Mouse).